Consider the following 322-residue polypeptide: Heat-inducible transcription repressor HrcA (322 aa).

Belongs to the HrcA family.

In terms of biological role, negative regulator of class I heat shock genes (grpE-dnaK-dnaJ and groELS operons). Prevents heat-shock induction of these operons. The chain is Heat-inducible transcription repressor HrcA from Staphylococcus carnosus (strain TM300).